Here is a 152-residue protein sequence, read N- to C-terminus: Protein SprT-like (152 aa).

In terms of domain architecture, SprT-like spans 7 to 148 (QRLVEEVSLQ…GKCKGKLNLI (142 aa)). H67 is a Zn(2+) binding site. E68 is an active-site residue. H71 is a binding site for Zn(2+).

It belongs to the SprT family. Zn(2+) is required as a cofactor.

It is found in the cytoplasm. The chain is Protein SprT-like from Bacillus cereus (strain 03BB102).